A 443-amino-acid chain; its full sequence is Tol-Pal system protein TolB (443 aa).

The first 33 residues, 1-33 (MKIGIINTKIRTVFSAFACMIAASLVCTMPARA), serve as a signal peptide directing secretion.

The protein belongs to the TolB family. As to quaternary structure, the Tol-Pal system is composed of five core proteins: the inner membrane proteins TolA, TolQ and TolR, the periplasmic protein TolB and the outer membrane protein Pal. They form a network linking the inner and outer membranes and the peptidoglycan layer.

Its subcellular location is the periplasm. Functionally, part of the Tol-Pal system, which plays a role in outer membrane invagination during cell division and is important for maintaining outer membrane integrity. The protein is Tol-Pal system protein TolB of Brucella canis (strain ATCC 23365 / NCTC 10854 / RM-666).